The sequence spans 68 residues: Small ribosomal subunit protein bS21 (68 aa).

It belongs to the bacterial ribosomal protein bS21 family.

This is Small ribosomal subunit protein bS21 from Jannaschia sp. (strain CCS1).